The following is a 508-amino-acid chain: Aldehyde dehydrogenase family 7 member B4 (508 aa).

244 to 249 (GSSRVG) contacts NAD(+). Catalysis depends on glutamate 266, which acts as the Proton acceptor. The active-site Nucleophile is the cysteine 300.

It belongs to the aldehyde dehydrogenase family. Homotetramer.

It catalyses the reaction an aldehyde + NAD(+) + H2O = a carboxylate + NADH + 2 H(+). The chain is Aldehyde dehydrogenase family 7 member B4 (ALDH7B4) from Arabidopsis thaliana (Mouse-ear cress).